The chain runs to 145 residues: Hemoglobin fetal subunit beta (145 aa).

A Globin domain is found at 1–145; it reads MLSAEEKAAV…VANALAHRYH (145 aa). Positions 62 and 91 each coordinate heme b.

The protein belongs to the globin family. In terms of assembly, heterotetramer of two alpha chains and two beta chains. In terms of tissue distribution, red blood cells.

Functionally, involved in oxygen transport from the lung to the various peripheral tissues. This is Hemoglobin fetal subunit beta from Bos taurus (Bovine).